Consider the following 302-residue polypeptide: Porphobilinogen deaminase (302 aa).

Position 234 is an S-(dipyrrolylmethanemethyl)cysteine (C234).

This sequence belongs to the HMBS family. As to quaternary structure, monomer. Dipyrromethane is required as a cofactor.

It catalyses the reaction 4 porphobilinogen + H2O = hydroxymethylbilane + 4 NH4(+). It functions in the pathway porphyrin-containing compound metabolism; protoporphyrin-IX biosynthesis; coproporphyrinogen-III from 5-aminolevulinate: step 2/4. Functionally, tetrapolymerization of the monopyrrole PBG into the hydroxymethylbilane pre-uroporphyrinogen in several discrete steps. This is Porphobilinogen deaminase from Corynebacterium glutamicum (strain R).